Reading from the N-terminus, the 377-residue chain is Dihydroorotate dehydrogenase (quinone) (377 aa).

Residues 78–82 and A102 each bind FMN; that span reads AGCDK. K82 provides a ligand contact to substrate. 127-130 lines the substrate pocket; that stretch reads NRLG. FMN contacts are provided by N159 and N192. N192 provides a ligand contact to substrate. S195 (nucleophile) is an active-site residue. Substrate is bound at residue N197. FMN-binding residues include K230 and T258. 259-260 contacts substrate; sequence NT. Residues G288, G317, and 338–339 contribute to the FMN site; that span reads YT.

The protein belongs to the dihydroorotate dehydrogenase family. Type 2 subfamily. As to quaternary structure, monomer. It depends on FMN as a cofactor.

Its subcellular location is the cell membrane. The enzyme catalyses (S)-dihydroorotate + a quinone = orotate + a quinol. Its pathway is pyrimidine metabolism; UMP biosynthesis via de novo pathway; orotate from (S)-dihydroorotate (quinone route): step 1/1. Its function is as follows. Catalyzes the conversion of dihydroorotate to orotate with quinone as electron acceptor. This Rippkaea orientalis (strain PCC 8801 / RF-1) (Cyanothece sp. (strain PCC 8801)) protein is Dihydroorotate dehydrogenase (quinone).